The sequence spans 766 residues: DNA ligase (766 aa).

The interval methionine 1–arginine 30 is disordered. Residues aspartate 57–aspartate 61, serine 106–leucine 107, and glutamate 141 contribute to the NAD(+) site. Residue lysine 143 is the N6-AMP-lysine intermediate of the active site. The NAD(+) site is built by arginine 164, glutamate 201, lysine 317, and lysine 341. Zn(2+) is bound by residues cysteine 435, cysteine 438, cysteine 454, and cysteine 460. Residues serine 669 to alanine 758 enclose the BRCT domain. Positions glutamine 747–glutamate 766 are disordered.

It belongs to the NAD-dependent DNA ligase family. LigA subfamily. Mg(2+) is required as a cofactor. Mn(2+) serves as cofactor.

The catalysed reaction is NAD(+) + (deoxyribonucleotide)n-3'-hydroxyl + 5'-phospho-(deoxyribonucleotide)m = (deoxyribonucleotide)n+m + AMP + beta-nicotinamide D-nucleotide.. DNA ligase that catalyzes the formation of phosphodiester linkages between 5'-phosphoryl and 3'-hydroxyl groups in double-stranded DNA using NAD as a coenzyme and as the energy source for the reaction. It is essential for DNA replication and repair of damaged DNA. The sequence is that of DNA ligase from Kocuria rhizophila (strain ATCC 9341 / DSM 348 / NBRC 103217 / DC2201).